Here is a 335-residue protein sequence, read N- to C-terminus: Nucleoid-associated protein PSEEN4449 (335 aa).

Belongs to the YejK family.

The protein localises to the cytoplasm. It is found in the nucleoid. This is Nucleoid-associated protein PSEEN4449 from Pseudomonas entomophila (strain L48).